Here is a 72-residue protein sequence, read N- to C-terminus: Translational regulator CsrA (72 aa).

It belongs to the CsrA/RsmA family. Homodimer; the beta-strands of each monomer intercalate to form a hydrophobic core, while the alpha-helices form wings that extend away from the core.

The protein resides in the cytoplasm. Its function is as follows. A translational regulator that binds mRNA to regulate translation initiation and/or mRNA stability. Usually binds in the 5'-UTR at or near the Shine-Dalgarno sequence preventing ribosome-binding, thus repressing translation. Its main target seems to be the major flagellin gene, while its function is anatagonized by FliW. The polypeptide is Translational regulator CsrA (Agathobacter rectalis (strain ATCC 33656 / DSM 3377 / JCM 17463 / KCTC 5835 / VPI 0990) (Eubacterium rectale)).